We begin with the raw amino-acid sequence, 652 residues long: tRNA 5-methylaminomethyl-2-thiouridine biosynthesis bifunctional protein MnmC (652 aa).

Residues 1–235 form a tRNA (mnm(5)s(2)U34)-methyltransferase region; sequence MPDRLVPATL…EPALRVGEYA (235 aa). The interval 259-652 is FAD-dependent cmnm(5)s(2)U34 oxidoreductase; the sequence is IGAGLAGCAV…IRALRGRQIG (394 aa).

In the N-terminal section; belongs to the methyltransferase superfamily. tRNA (mnm(5)s(2)U34)-methyltransferase family. This sequence in the C-terminal section; belongs to the DAO family. The cofactor is FAD.

The protein resides in the cytoplasm. It catalyses the reaction 5-aminomethyl-2-thiouridine(34) in tRNA + S-adenosyl-L-methionine = 5-methylaminomethyl-2-thiouridine(34) in tRNA + S-adenosyl-L-homocysteine + H(+). Catalyzes the last two steps in the biosynthesis of 5-methylaminomethyl-2-thiouridine (mnm(5)s(2)U) at the wobble position (U34) in tRNA. Catalyzes the FAD-dependent demodification of cmnm(5)s(2)U34 to nm(5)s(2)U34, followed by the transfer of a methyl group from S-adenosyl-L-methionine to nm(5)s(2)U34, to form mnm(5)s(2)U34. The sequence is that of tRNA 5-methylaminomethyl-2-thiouridine biosynthesis bifunctional protein MnmC from Burkholderia ambifaria (strain ATCC BAA-244 / DSM 16087 / CCUG 44356 / LMG 19182 / AMMD) (Burkholderia cepacia (strain AMMD)).